Reading from the N-terminus, the 340-residue chain is Phosphoribosylformylglycinamidine cyclo-ligase (340 aa).

Belongs to the AIR synthase family.

The protein localises to the cytoplasm. The catalysed reaction is 2-formamido-N(1)-(5-O-phospho-beta-D-ribosyl)acetamidine + ATP = 5-amino-1-(5-phospho-beta-D-ribosyl)imidazole + ADP + phosphate + H(+). The protein operates within purine metabolism; IMP biosynthesis via de novo pathway; 5-amino-1-(5-phospho-D-ribosyl)imidazole from N(2)-formyl-N(1)-(5-phospho-D-ribosyl)glycinamide: step 2/2. In Streptococcus sanguinis (strain SK36), this protein is Phosphoribosylformylglycinamidine cyclo-ligase.